The primary structure comprises 128 residues: Keratin-associated protein 2-1 (128 aa).

Residues 5–112 (CCGSTFSSLS…SVQSPCCRPP (108 aa)) are 10 X 5 AA repeats of C-C-[CDPQRWG]-[APRS]-[CIPSTVD].

The protein belongs to the KRTAP type 2 family. Interacts with hair keratins.

In the hair cortex, hair keratin intermediate filaments are embedded in an interfilamentous matrix, consisting of hair keratin-associated proteins (KRTAP), which are essential for the formation of a rigid and resistant hair shaft through their extensive disulfide bond cross-linking with abundant cysteine residues of hair keratins. The matrix proteins include the high-sulfur and high-glycine-tyrosine keratins. The chain is Keratin-associated protein 2-1 (KRTAP2-1) from Homo sapiens (Human).